Reading from the N-terminus, the 426-residue chain is Enolase (426 aa).

Gln-163 serves as a coordination point for (2R)-2-phosphoglycerate. Glu-205 (proton donor) is an active-site residue. 3 residues coordinate Mg(2+): Asp-242, Glu-283, and Asp-310. (2R)-2-phosphoglycerate-binding residues include Lys-335, Arg-364, Ser-365, and Lys-386. Lys-335 functions as the Proton acceptor in the catalytic mechanism.

The protein belongs to the enolase family. Mg(2+) serves as cofactor.

The protein resides in the cytoplasm. It is found in the secreted. It localises to the cell surface. It carries out the reaction (2R)-2-phosphoglycerate = phosphoenolpyruvate + H2O. It functions in the pathway carbohydrate degradation; glycolysis; pyruvate from D-glyceraldehyde 3-phosphate: step 4/5. Functionally, catalyzes the reversible conversion of 2-phosphoglycerate (2-PG) into phosphoenolpyruvate (PEP). It is essential for the degradation of carbohydrates via glycolysis. The sequence is that of Enolase from Beutenbergia cavernae (strain ATCC BAA-8 / DSM 12333 / CCUG 43141 / JCM 11478 / NBRC 16432 / NCIMB 13614 / HKI 0122).